Here is a 200-residue protein sequence, read N- to C-terminus: Large ribosomal subunit protein bL9 (200 aa).

Belongs to the bacterial ribosomal protein bL9 family.

Binds to the 23S rRNA. This Ruegeria pomeroyi (strain ATCC 700808 / DSM 15171 / DSS-3) (Silicibacter pomeroyi) protein is Large ribosomal subunit protein bL9.